We begin with the raw amino-acid sequence, 137 residues long: MIKITKTISQSTQSGGRKTAKARVQLLPGTGTKVMVNGKQASDYFQNNAVYLQNMFTPRDLVKTETKYDVHILVEGGGLSAQAQAVKLALSKAFVDFFPEYRKVFKKPGLLTRDARIKERRKYGLKKARKAPQFSKR.

This sequence belongs to the universal ribosomal protein uS9 family.

The protein resides in the plastid. It is found in the chloroplast. The polypeptide is Small ribosomal subunit protein uS9c (rps9) (Chlorella vulgaris (Green alga)).